A 376-amino-acid polypeptide reads, in one-letter code: 26S proteasome non-ATPase regulatory subunit 13 (376 aa).

The PCI domain maps to 171 to 338; sequence SYYKDALRFL…KRVHMTWVQP (168 aa).

The protein belongs to the proteasome subunit S11 family. As to quaternary structure, component of the 19S proteasome regulatory particle complex. The 26S proteasome consists of a 20S core particle (CP) and two 19S regulatory subunits (RP). The regulatory particle is made of a lid composed of 9 subunits including PSMD13, a base containing 6 ATPases and few additional components.

Component of the 26S proteasome, a multiprotein complex involved in the ATP-dependent degradation of ubiquitinated proteins. This complex plays a key role in the maintenance of protein homeostasis by removing misfolded or damaged proteins, which could impair cellular functions, and by removing proteins whose functions are no longer required. Therefore, the proteasome participates in numerous cellular processes, including cell cycle progression, apoptosis, or DNA damage repair. In Bos taurus (Bovine), this protein is 26S proteasome non-ATPase regulatory subunit 13 (PSMD13).